The chain runs to 649 residues: Endoplasmic reticulum chaperone BiP (649 aa).

The signal sequence occupies residues 1 to 20; it reads MGLSTYVGTFLLCILTLSHC. ATP is bound by residues 36–39, Lys-96, 226–228, 292–299, and 363–366; these read GTTY, GGT, EKAKRTLS, and GSTR. The nucleotide-binding (NBD) stretch occupies residues 125 to 279; it reads KPYMKVQVGS…KKKEGKDITK (155 aa). The tract at residues 399–499 is substrate-binding (SBD); the sequence is VQAGVISGVE…PRGLPQIEVT (101 aa). The Prevents secretion from ER motif lies at 646-649; sequence KEEL.

Belongs to the heat shock protein 70 family.

Its subcellular location is the endoplasmic reticulum lumen. It carries out the reaction ATP + H2O = ADP + phosphate + H(+). The chaperone activity is regulated by ATP-induced allosteric coupling of the nucleotide-binding (NBD) and substrate-binding (SBD) domains. In the ADP-bound and nucleotide-free (apo) states, the two domains have little interaction. In contrast, in the ATP-bound state the two domains are tightly coupled, which results in drastically accelerated kinetics in both binding and release of polypeptide substrates. J domain-containing co-chaperones stimulate the ATPase activity and are required for efficient substrate recognition. Its function is as follows. Endoplasmic reticulum chaperone that plays a key role in protein folding and quality control in the endoplasmic reticulum lumen. Involved in the correct folding of proteins and degradation of misfolded proteins. Acts as a key repressor of the unfolded protein response (UPR). The protein is Endoplasmic reticulum chaperone BiP of Echinococcus multilocularis (Fox tapeworm).